A 184-amino-acid polypeptide reads, in one-letter code: Flavodoxin FldP (184 aa).

In terms of domain architecture, Flavodoxin-like spans 4-176 (AVVVYFSGYG…TVKLYAARVA (173 aa)). Residues 10–14 (SGYGH) and 91–147 (GFTN…SVGA) each bind FMN.

The protein belongs to the FldP flavodoxin family. FMN serves as cofactor.

Its function is as follows. Flavodoxins are low-potential electron donors to a number of redox enzymes. FldP protects the cell from oxidative stress and reactive oxygen species (ROS) damage, thereby expanding the capabilities of P.aeruginosa to thrive in hostile environments, and contributes to bacterial survival within the host. In vitro, is able to mediate ferredoxin-NADP(H) reductase (FNR)-driven cytochrome c reduction. In Pseudomonas aeruginosa (strain UCBPP-PA14), this protein is Flavodoxin FldP.